We begin with the raw amino-acid sequence, 144 residues long: Large ribosomal subunit protein uL15 (144 aa).

Residues 1 to 58 (MKLNNLSPAPGSKHAEKRVGRGIGSGLGKTGGRGHKGQKSRSGGSVKPGFEGGQMPLQ) are disordered. The span at 21–31 (RGIGSGLGKTG) shows a compositional bias: gly residues.

Belongs to the universal ribosomal protein uL15 family. Part of the 50S ribosomal subunit.

Functionally, binds to the 23S rRNA. The sequence is that of Large ribosomal subunit protein uL15 from Chromohalobacter salexigens (strain ATCC BAA-138 / DSM 3043 / CIP 106854 / NCIMB 13768 / 1H11).